A 259-amino-acid polypeptide reads, in one-letter code: NAP1-related protein 1 (259 aa).

A compositionally biased stretch (basic and acidic residues) spans Met-1–Gly-15. Residues Met-1 to Pro-20 form a disordered region. Positions Val-21 to Arg-62 form a coiled coil. A disordered region spans residues Glu-228–Asn-259.

Belongs to the nucleosome assembly protein (NAP) family.

The protein resides in the nucleus. It localises to the cytoplasm. Its function is as follows. Acts as a histone H2A/H2B chaperone in nucleosome assembly. This is NAP1-related protein 1 from Oryza sativa subsp. indica (Rice).